The chain runs to 461 residues: Argininosuccinate lyase (461 aa).

The protein belongs to the lyase 1 family. Argininosuccinate lyase subfamily.

It is found in the cytoplasm. The catalysed reaction is 2-(N(omega)-L-arginino)succinate = fumarate + L-arginine. The protein operates within amino-acid biosynthesis; L-arginine biosynthesis; L-arginine from L-ornithine and carbamoyl phosphate: step 3/3. The chain is Argininosuccinate lyase from Clostridium beijerinckii (strain ATCC 51743 / NCIMB 8052) (Clostridium acetobutylicum).